The chain runs to 428 residues: GTPase Obg (428 aa).

The Obg domain occupies 1–158 (MFVDQVQVEV…RFIKLELKVL (158 aa)). The 175-residue stretch at 159 to 333 (ADVGLVGFPS…LMHKTAEVLK (175 aa)) folds into the OBG-type G domain. GTP is bound by residues 165–172 (GFPSVGKS), 190–194 (FTTLV), 212–215 (DLPG), 282–285 (TKMD), and 314–316 (SSL). Residues S172 and T192 each coordinate Mg(2+). One can recognise an OCT domain in the interval 350 to 428 (YKYQPEPALK…IDDFTFEFVE (79 aa)).

This sequence belongs to the TRAFAC class OBG-HflX-like GTPase superfamily. OBG GTPase family. In terms of assembly, monomer. The cofactor is Mg(2+).

It is found in the cytoplasm. Its function is as follows. An essential GTPase which binds GTP, GDP and possibly (p)ppGpp with moderate affinity, with high nucleotide exchange rates and a fairly low GTP hydrolysis rate. Plays a role in control of the cell cycle, stress response, ribosome biogenesis and in those bacteria that undergo differentiation, in morphogenesis control. In Lacticaseibacillus casei (strain BL23) (Lactobacillus casei), this protein is GTPase Obg.